A 165-amino-acid chain; its full sequence is Phosphopantetheine adenylyltransferase (165 aa).

Threonine 9 contacts substrate. ATP contacts are provided by residues 9–10 (TF) and histidine 17. Lysine 41, leucine 73, and arginine 87 together coordinate substrate. Residues 88–90 (GLR), glutamate 98, and 123–129 (YQFISGT) each bind ATP.

The protein belongs to the bacterial CoaD family. In terms of assembly, homohexamer. It depends on Mg(2+) as a cofactor.

It is found in the cytoplasm. The enzyme catalyses (R)-4'-phosphopantetheine + ATP + H(+) = 3'-dephospho-CoA + diphosphate. The protein operates within cofactor biosynthesis; coenzyme A biosynthesis; CoA from (R)-pantothenate: step 4/5. Reversibly transfers an adenylyl group from ATP to 4'-phosphopantetheine, yielding dephospho-CoA (dPCoA) and pyrophosphate. This Burkholderia vietnamiensis (strain G4 / LMG 22486) (Burkholderia cepacia (strain R1808)) protein is Phosphopantetheine adenylyltransferase.